Here is a 430-residue protein sequence, read N- to C-terminus: Glutamyl-tRNA reductase 1 (430 aa).

Substrate-binding positions include 49–52 (TCNR), serine 109, 114–116 (EGQ), and glutamine 120. Catalysis depends on cysteine 50, which acts as the Nucleophile. 189 to 194 (GAGSMA) lines the NADP(+) pocket.

It belongs to the glutamyl-tRNA reductase family. As to quaternary structure, homodimer.

The catalysed reaction is (S)-4-amino-5-oxopentanoate + tRNA(Glu) + NADP(+) = L-glutamyl-tRNA(Glu) + NADPH + H(+). Its pathway is porphyrin-containing compound metabolism; protoporphyrin-IX biosynthesis; 5-aminolevulinate from L-glutamyl-tRNA(Glu): step 1/2. Catalyzes the NADPH-dependent reduction of glutamyl-tRNA(Glu) to glutamate 1-semialdehyde (GSA). In Nocardioides sp. (strain ATCC BAA-499 / JS614), this protein is Glutamyl-tRNA reductase 1.